Reading from the N-terminus, the 95-residue chain is Small ribosomal subunit protein uS19 (95 aa).

This sequence belongs to the universal ribosomal protein uS19 family.

In terms of biological role, protein S19 forms a complex with S13 that binds strongly to the 16S ribosomal RNA. This is Small ribosomal subunit protein uS19 from Roseiflexus castenholzii (strain DSM 13941 / HLO8).